Reading from the N-terminus, the 509-residue chain is Maturase K (509 aa).

The protein belongs to the intron maturase 2 family. MatK subfamily.

The protein localises to the plastid. It localises to the chloroplast. Its function is as follows. Usually encoded in the trnK tRNA gene intron. Probably assists in splicing its own and other chloroplast group II introns. The chain is Maturase K from Drimys granadensis.